The chain runs to 461 residues: MAFRTALRRVAAVNAAPATRLAGAGAGAATAARRSYATASQLTHPDPTEDSPSGKMVREHVPYMVTTYSRPPPVFVKGKGSYLWDLEDRKYLDFTSGIAVNSLGHCDEEFSKIIAEQAQELVHASNLYYNPWTGALSKLLVESTKASGGMHDASSVFVCNSGSEANEAGIKFARKVGKVLDPSGSKVEIVCFQNAFHGRTMGSLSATPNPKYQAPFAPMVPGFKVGTYNDIAAIPSLVTEKTCSVIVEPIQGEGGVMPATEEFLVALGKRCREVGALLHYDEIQCGLARTGTFWAHSSLPKEAHPDILTTAKAIGNGFPIAATIVNEHVASKIKVGDHGTTFGGNPLACRLAHYIVGRLADKQLQEGVKAKSEVFLRGFEKLRNKFPSLVKEVRGKGLILGLQLSEDPTPVIKAARERGLLVITAGTNTLRFVPSLLVTEGEIEEGLKILEESFEAVMVKA.

Positions 36 to 56 (YATASQLTHPDPTEDSPSGKM) are disordered. K312 carries the post-translational modification N6-(pyridoxal phosphate)lysine.

It belongs to the class-III pyridoxal-phosphate-dependent aminotransferase family. Requires pyridoxal 5'-phosphate as cofactor.

Its subcellular location is the mitochondrion matrix. It catalyses the reaction N(2)-acetyl-L-ornithine + 2-oxoglutarate = N-acetyl-L-glutamate 5-semialdehyde + L-glutamate. It functions in the pathway amino-acid biosynthesis; L-arginine biosynthesis; N(2)-acetyl-L-ornithine from L-glutamate: step 4/4. This Neurospora crassa (strain ATCC 24698 / 74-OR23-1A / CBS 708.71 / DSM 1257 / FGSC 987) protein is Acetylornithine aminotransferase, mitochondrial (arg-8).